Consider the following 181-residue polypeptide: ATP-dependent protease subunit HslV (181 aa).

Thr-9 is a catalytic residue. 3 residues coordinate Na(+): Ala-166, Cys-169, and Thr-172.

This sequence belongs to the peptidase T1B family. HslV subfamily. In terms of assembly, a double ring-shaped homohexamer of HslV is capped on each side by a ring-shaped HslU homohexamer. The assembly of the HslU/HslV complex is dependent on binding of ATP.

The protein resides in the cytoplasm. The enzyme catalyses ATP-dependent cleavage of peptide bonds with broad specificity.. Allosterically activated by HslU binding. Protease subunit of a proteasome-like degradation complex believed to be a general protein degrading machinery. The chain is ATP-dependent protease subunit HslV from Staphylococcus aureus (strain JH1).